A 109-amino-acid chain; its full sequence is Small ribosomal subunit protein bS6 (109 aa).

It belongs to the bacterial ribosomal protein bS6 family.

In terms of biological role, binds together with bS18 to 16S ribosomal RNA. The polypeptide is Small ribosomal subunit protein bS6 (Ehrlichia ruminantium (strain Gardel)).